The primary structure comprises 164 residues: Large ribosomal subunit protein uL10 (164 aa).

This sequence belongs to the universal ribosomal protein uL10 family. Part of the ribosomal stalk of the 50S ribosomal subunit. The N-terminus interacts with L11 and the large rRNA to form the base of the stalk. The C-terminus forms an elongated spine to which L12 dimers bind in a sequential fashion forming a multimeric L10(L12)X complex.

Its function is as follows. Forms part of the ribosomal stalk, playing a central role in the interaction of the ribosome with GTP-bound translation factors. The protein is Large ribosomal subunit protein uL10 of Photobacterium profundum (strain SS9).